Reading from the N-terminus, the 717-residue chain is Delta-1-pyrroline-5-carboxylate synthase (717 aa).

The glutamate 5-kinase stretch occupies residues 1–296 (METVDSTRAF…WASIGETDAR (296 aa)). Substrate contacts are provided by Ser-60, Asp-157, and Asn-176. ATP is bound by residues 196–197 (SD) and 236–242 (RGGMTAK). The segment at 297 to 717 (EMAVAARACS…YSHKDLTQQG (421 aa)) is gamma-glutamyl phosphate reductase.

It in the N-terminal section; belongs to the glutamate 5-kinase family. In the C-terminal section; belongs to the gamma-glutamyl phosphate reductase family. Expressed at high levels in leaves and is inducible in roots subjected to salt stress.

The enzyme catalyses L-glutamate + ATP = L-glutamyl 5-phosphate + ADP. It catalyses the reaction L-glutamate 5-semialdehyde + phosphate + NADP(+) = L-glutamyl 5-phosphate + NADPH + H(+). Its pathway is amino-acid biosynthesis; L-proline biosynthesis; L-glutamate 5-semialdehyde from L-glutamate: step 1/2. It functions in the pathway amino-acid biosynthesis; L-proline biosynthesis; L-glutamate 5-semialdehyde from L-glutamate: step 2/2. With respect to regulation, feedback regulated by proline. In terms of biological role, P5CS plays a key role in proline biosynthesis, leading to osmoregulation in plants. This Solanum lycopersicum (Tomato) protein is Delta-1-pyrroline-5-carboxylate synthase (PRO2).